A 98-amino-acid chain; its full sequence is Cystatin-B (98 aa).

In terms of domain architecture, Cystatin spans 4–83; sequence GGTSQPVDAD…PCNGETLELS (80 aa). Positions 46–50 match the Secondary area of contact motif; sequence QCVPG.

It belongs to the cystatin family. Ubiquitously expressed in normal and lipopolysaccharide (LPS)-stimulated tissues including brain, eye, gullet, heart, liver, muscle, stomach, kidney, spleen, pyloric ceca, intestine and gill.

It is found in the cytoplasm. Its activity is regulated as follows. Greatly decreased inhibitory activity against papain protease by metal ions including ZnSO(4), CuSO(4), HgCl(2) and CoCl(2). Decreased inhibitory activity against papain protease by detergents including Tween 20, SDS and Brij 35. Thiol protease inhibitor. Has high papain, bovine cathepsin B and fish cathepsins F and X inhibitory activity and inhibits fish cathepsins L, S and K to a lesser extent in vitro. May be involved in innate immunity. This is Cystatin-B from Paralichthys olivaceus (Bastard halibut).